The following is a 49-amino-acid chain: Large ribosomal subunit protein bL33B (49 aa).

It belongs to the bacterial ribosomal protein bL33 family.

This is Large ribosomal subunit protein bL33B from Listeria welshimeri serovar 6b (strain ATCC 35897 / DSM 20650 / CCUG 15529 / CIP 8149 / NCTC 11857 / SLCC 5334 / V8).